Consider the following 531-residue polypeptide: HERV-H LTR-associating protein 1 (531 aa).

The signal sequence occupies residues 1–29 (MLGFLSRGPSMKLCMGLACVLSLWNTVSG). N79, N143, and N161 each carry an N-linked (GlcNAc...) asparagine glycan. Disordered regions lie at residues 231 to 289 (GTAR…RPPE) and 340 to 362 (EKKPGGSLWETRSSPPTTAGTEE). Polar residues-rich tracts occupy residues 232–269 (TARTSKPTTKSQKTLPSTSPGHWTQSTPWASALRSSPW) and 349–362 (ETRSSPPTTAGTEE).

It localises to the secreted. This Homo sapiens (Human) protein is HERV-H LTR-associating protein 1 (HHLA1).